The chain runs to 841 residues: Translation initiation factor IF-2 (841 aa).

Residues 94–255 (QRSPEEIEAE…RNAHGFQSPT (162 aa)) form a disordered region. Residues 96-135 (SPEEIEAERKREMDERRAVENAARQKAEEEAKRRAEEDAR) show a composition bias toward basic and acidic residues. Residues 136–175 (NQPAAGQPASAPAQPVAAAEPVREAPAAAAPAPASAAPSA) are compositionally biased toward low complexity. 2 stretches are compositionally biased toward basic and acidic residues: residues 176-217 (DARK…EKAP) and 225-234 (TTDEESDSFR). Over residues 235 to 248 (RGGRGKGKLKKRNA) the composition is skewed to basic residues. The tr-type G domain occupies 341-510 (SRAPVVTVMG…LLQAEVLELK (170 aa)). The segment at 350–357 (GHVDHGKT) is G1. 350 to 357 (GHVDHGKT) provides a ligand contact to GTP. Residues 375-379 (GITQH) form a G2 region. The tract at residues 396 to 399 (DTPG) is G3. GTP contacts are provided by residues 396 to 400 (DTPGH) and 450 to 453 (NKID). Residues 450 to 453 (NKID) are G4. The G5 stretch occupies residues 486–488 (SAK).

Belongs to the TRAFAC class translation factor GTPase superfamily. Classic translation factor GTPase family. IF-2 subfamily.

Its subcellular location is the cytoplasm. Its function is as follows. One of the essential components for the initiation of protein synthesis. Protects formylmethionyl-tRNA from spontaneous hydrolysis and promotes its binding to the 30S ribosomal subunits. Also involved in the hydrolysis of GTP during the formation of the 70S ribosomal complex. In Pseudomonas syringae pv. tomato (strain ATCC BAA-871 / DC3000), this protein is Translation initiation factor IF-2.